We begin with the raw amino-acid sequence, 88 residues long: N-alpha-acetyltransferase 38, NatC auxiliary subunit (88 aa).

The Sm domain maps to 1–72 (MDILKLSDFI…VKTIMIDKPV (72 aa)).

As to quaternary structure, component of the N-terminal acetyltransferase C (NatC) complex, composed of the catalytic subunit Naa30/MAK3, a large auxiliary subunit Naa35/MAK10 and a small auxiliary subunit Naa38/MAK31.

Functionally, component of the NatC N-terminal acetyltransferase, which associates with the ribosome to acetylate nascent protein chains in a cotranslational manner. NatC acetylates protein N-termini starting with methionine, followed by a hydrophobic or amphipathic amino acid, with amino acids at positions 3 and 4 also contributing to NatC recognition. The first 4 amino acids of cognate substrates are recognized at the Naa30/MAK3-Naa35/MAK10 interface. NatC-dependent acetylation targets various substrate proteins to specific subcellular sites, including isoform 2 of tRNA-specific methyltransferase Trm1 to the inner nuclear membrane. Catalyzes the acetylation of the N-terminal Met of ARF-like GTPase ARL3, which is required for its Golgi localization via interaction with the Golgi-localized integral membrane protein SYS1, which may serve as a receptor for acetylated ARL3. Catalyzes the acetylation of the N-terminal Met of L-A virus Gag protein. MAK31 is necessary for the structural stability of L-A double-stranded RNA-containing particles. Necessary for growth at 37 degrees Celsius as well as for maintenance of the killer plasmid. The sequence is that of N-alpha-acetyltransferase 38, NatC auxiliary subunit (MAK31) from Saccharomyces cerevisiae (strain ATCC 204508 / S288c) (Baker's yeast).